The sequence spans 275 residues: Formamidopyrimidine-DNA glycosylase (275 aa).

Proline 2 functions as the Schiff-base intermediate with DNA in the catalytic mechanism. Catalysis depends on glutamate 3, which acts as the Proton donor. Catalysis depends on lysine 59, which acts as the Proton donor; for beta-elimination activity. 3 residues coordinate DNA: histidine 92, arginine 111, and arginine 155. The FPG-type zinc-finger motif lies at 240–274; that stretch reads NVYGRAGKACPKCGTTIEKQVLGQRSSYYCPQCQR. The active-site Proton donor; for delta-elimination activity is arginine 264.

This sequence belongs to the FPG family. In terms of assembly, monomer. Zn(2+) serves as cofactor.

The enzyme catalyses Hydrolysis of DNA containing ring-opened 7-methylguanine residues, releasing 2,6-diamino-4-hydroxy-5-(N-methyl)formamidopyrimidine.. It catalyses the reaction 2'-deoxyribonucleotide-(2'-deoxyribose 5'-phosphate)-2'-deoxyribonucleotide-DNA = a 3'-end 2'-deoxyribonucleotide-(2,3-dehydro-2,3-deoxyribose 5'-phosphate)-DNA + a 5'-end 5'-phospho-2'-deoxyribonucleoside-DNA + H(+). In terms of biological role, involved in base excision repair of DNA damaged by oxidation or by mutagenic agents. Acts as a DNA glycosylase that recognizes and removes damaged bases. Has a preference for oxidized purines, such as 7,8-dihydro-8-oxoguanine (8-oxoG). Has AP (apurinic/apyrimidinic) lyase activity and introduces nicks in the DNA strand. Cleaves the DNA backbone by beta-delta elimination to generate a single-strand break at the site of the removed base with both 3'- and 5'-phosphates. This Magnetococcus marinus (strain ATCC BAA-1437 / JCM 17883 / MC-1) protein is Formamidopyrimidine-DNA glycosylase.